A 413-amino-acid polypeptide reads, in one-letter code: Dual-specificity RNA methyltransferase RlmN (413 aa).

The active-site Proton acceptor is the glutamate 126. The Radical SAM core domain occupies 132–381; the sequence is EEGRGTLCIS…IRTPRGRDIL (250 aa). A disulfide bond links cysteine 139 and cysteine 384. Residues cysteine 146, cysteine 150, and cysteine 153 each coordinate [4Fe-4S] cluster. Residues 210–211, serine 242, 264–266, and asparagine 341 contribute to the S-adenosyl-L-methionine site; these read GE and SLH. Residue cysteine 384 is the S-methylcysteine intermediate of the active site.

This sequence belongs to the radical SAM superfamily. RlmN family. [4Fe-4S] cluster is required as a cofactor.

It localises to the cytoplasm. The enzyme catalyses adenosine(2503) in 23S rRNA + 2 reduced [2Fe-2S]-[ferredoxin] + 2 S-adenosyl-L-methionine = 2-methyladenosine(2503) in 23S rRNA + 5'-deoxyadenosine + L-methionine + 2 oxidized [2Fe-2S]-[ferredoxin] + S-adenosyl-L-homocysteine. It carries out the reaction adenosine(37) in tRNA + 2 reduced [2Fe-2S]-[ferredoxin] + 2 S-adenosyl-L-methionine = 2-methyladenosine(37) in tRNA + 5'-deoxyadenosine + L-methionine + 2 oxidized [2Fe-2S]-[ferredoxin] + S-adenosyl-L-homocysteine. In terms of biological role, specifically methylates position 2 of adenine 2503 in 23S rRNA and position 2 of adenine 37 in tRNAs. m2A2503 modification seems to play a crucial role in the proofreading step occurring at the peptidyl transferase center and thus would serve to optimize ribosomal fidelity. The polypeptide is Dual-specificity RNA methyltransferase RlmN (Sinorhizobium medicae (strain WSM419) (Ensifer medicae)).